The following is a 216-amino-acid chain: Thylakoid lumenal 16.5 kDa protein, chloroplastic (216 aa).

The N-terminal 38 residues, methionine 1–serine 38, are a transit peptide targeting the chloroplast. Residues serine 39–alanine 73 constitute a thylakoid transit peptide.

The protein resides in the plastid. It is found in the chloroplast thylakoid lumen. The polypeptide is Thylakoid lumenal 16.5 kDa protein, chloroplastic (Arabidopsis thaliana (Mouse-ear cress)).